The chain runs to 322 residues: Mas-related G-protein coupled receptor member X3 (322 aa).

The Extracellular segment spans residues 1 to 31; that stretch reads MDPTIPALGTSQTPINRREETPCYKQTLSLT. Residues 32 to 52 traverse the membrane as a helical segment; the sequence is VLTCIISLVGLTGNAVVLWLL. Residues 53 to 60 lie on the Cytoplasmic side of the membrane; sequence GFRMRRNA. Residues 61-81 traverse the membrane as a helical segment; the sequence is VSTYILNLAAVDFLFLSGHIV. The Extracellular portion of the chain corresponds to 82-96; it reads RSPLRLISIRHPISK. The chain crosses the membrane as a helical span at residues 97–117; it reads IVNPVMTFPYFIGLSMLSAIS. Over 118 to 139 the chain is Cytoplasmic; that stretch reads TERCLSVLWPMWYRCRRPRHLS. Residues 140-160 traverse the membrane as a helical segment; that stretch reads VVVCVLLWALSLLRSILEWMF. Topologically, residues 161-177 are extracellular; it reads CDFLFSGADSVWCETSD. A helical membrane pass occupies residues 178 to 198; that stretch reads FITIAWLIFLCVVLCGSSLVL. The Cytoplasmic segment spans residues 199–213; sequence LVRILCGSRKMPLTR. A helical transmembrane segment spans residues 214–234; that stretch reads LYVTILLTVLVFLLCGLPFGI. Topologically, residues 235 to 254 are extracellular; sequence QWALFSRIHLDWKVLFCHVH. A helical transmembrane segment spans residues 255 to 275; it reads LISVFLSSLNSSANPIIYFFV. The Cytoplasmic portion of the chain corresponds to 276-322; that stretch reads GSFRQRQNRQNLKLVLQRALQDTPEVDEGGGRLPEETLELSVSRLEQ.

Belongs to the G-protein coupled receptor 1 family. Mas subfamily.

Its subcellular location is the cell membrane. In terms of biological role, orphan receptor. Probably involved in the function of nociceptive neurons. May regulate nociceptor function and/or development, including the sensation or modulation of pain. Potently activated by enkephalins. The sequence is that of Mas-related G-protein coupled receptor member X3 (MRGPRX3) from Macaca mulatta (Rhesus macaque).